The chain runs to 830 residues: ATP-dependent DNA helicase chl-1 (830 aa).

In terms of domain architecture, Helicase ATP-binding spans 1–403 (MDEFSFPFQP…HNLLYMKQLE (403 aa)). 35–42 (SPTGTGKS) contributes to the ATP binding site. Basic and acidic residues-rich tracts occupy residues 124–140 (GMVEVSRKRKAPARDTD) and 157–168 (NDEKSEKQRDSD). Positions 124–173 (GMVEVSRKRKAPARDTDQFLEPQDEAAPSEEYNNDEKSEKQRDSDFFDDV) are disordered. Cys222, Cys240, Cys272, and Cys308 together coordinate [4Fe-4S] cluster. Residues 351 to 354 (DEAH) carry the DEAH box motif.

Belongs to the DEAD box helicase family. DEAH subfamily. DDX11/CHL1 sub-subfamily. The cofactor is [4Fe-4S] cluster.

It localises to the nucleus. The enzyme catalyses Couples ATP hydrolysis with the unwinding of duplex DNA at the replication fork by translocating in the 5'-3' direction. This creates two antiparallel DNA single strands (ssDNA). The leading ssDNA polymer is the template for DNA polymerase III holoenzyme which synthesizes a continuous strand.. The catalysed reaction is ATP + H2O = ADP + phosphate + H(+). Functionally, required for normal cell proliferation and chromosome stability. Plays a role in DNA repair during replication. This Caenorhabditis elegans protein is ATP-dependent DNA helicase chl-1.